A 424-amino-acid chain; its full sequence is Serine--tRNA ligase (424 aa).

231–233 (TAE) contributes to the L-serine binding site. An ATP-binding site is contributed by 262 to 264 (RAE). Glu-285 provides a ligand contact to L-serine. Residue 349-352 (EISS) coordinates ATP. Ser-385 serves as a coordination point for L-serine.

The protein belongs to the class-II aminoacyl-tRNA synthetase family. Type-1 seryl-tRNA synthetase subfamily. Homodimer. The tRNA molecule binds across the dimer.

It localises to the cytoplasm. It carries out the reaction tRNA(Ser) + L-serine + ATP = L-seryl-tRNA(Ser) + AMP + diphosphate + H(+). The enzyme catalyses tRNA(Sec) + L-serine + ATP = L-seryl-tRNA(Sec) + AMP + diphosphate + H(+). It participates in aminoacyl-tRNA biosynthesis; selenocysteinyl-tRNA(Sec) biosynthesis; L-seryl-tRNA(Sec) from L-serine and tRNA(Sec): step 1/1. In terms of biological role, catalyzes the attachment of serine to tRNA(Ser). Is also able to aminoacylate tRNA(Sec) with serine, to form the misacylated tRNA L-seryl-tRNA(Sec), which will be further converted into selenocysteinyl-tRNA(Sec). The chain is Serine--tRNA ligase from Geobacillus kaustophilus (strain HTA426).